Consider the following 317-residue polypeptide: Pinoresinol reductase 2 (317 aa).

NADP(+)-binding residues include Thr18, Ser20, Leu21, Arg41, Lys50, Ser90, Gly91, Arg95, Asn98, and Ser121. (-)-pinoresinol is bound at residue Met125. NADP(+) is bound by residues Lys144 and Phe166. The active-site Proton acceptor is the Lys144. Residue Gly178 coordinates (-)-pinoresinol.

This sequence belongs to the NmrA-type oxidoreductase family. Isoflavone reductase subfamily. In terms of assembly, forms homodimers. In terms of tissue distribution, expressed in roots. Detected in stems.

It catalyses the reaction (-)-lariciresinol + NADP(+) = (-)-pinoresinol + NADPH + H(+). Functionally, reductase involved in lignan biosynthesis. Unlike conventional pinoresinol reductases that can reduce both pinoresinol and lariciresinol, PRR2 shows a strict substrate selectivity for (-)-pinoresinol. No activity with (+)-pinoresinol or lariciresinol. Abstracts the 4R-hydride from the NADPH cofactor during catalysis. The protein is Pinoresinol reductase 2 of Arabidopsis thaliana (Mouse-ear cress).